Consider the following 345-residue polypeptide: Eukaryotic translation initiation factor 3 subunit F (345 aa).

Positions Val30–Gly166 constitute an MPN domain. The interval Glu310–Ala345 is disordered. Positions Ala312 to Gly321 are enriched in low complexity. The segment covering Gln322–Gly331 has biased composition (gly residues). Positions Thr335–Ala345 are enriched in basic and acidic residues.

It belongs to the eIF-3 subunit F family. Component of the eukaryotic translation initiation factor 3 (eIF-3) complex.

It localises to the cytoplasm. Its function is as follows. Component of the eukaryotic translation initiation factor 3 (eIF-3) complex, which is involved in protein synthesis of a specialized repertoire of mRNAs and, together with other initiation factors, stimulates binding of mRNA and methionyl-tRNAi to the 40S ribosome. The eIF-3 complex specifically targets and initiates translation of a subset of mRNAs involved in cell proliferation. The chain is Eukaryotic translation initiation factor 3 subunit F from Neosartorya fischeri (strain ATCC 1020 / DSM 3700 / CBS 544.65 / FGSC A1164 / JCM 1740 / NRRL 181 / WB 181) (Aspergillus fischerianus).